Here is a 78-residue protein sequence, read N- to C-terminus: RNA-binding protein KhpA (78 aa).

In terms of domain architecture, KH spans 29–78 (TIIYELTVAKGDIGKIIGKEGRTIKAIRTLLVSVASRDNVKVSLEIMEER).

This sequence belongs to the KhpA RNA-binding protein family.

The protein resides in the cytoplasm. Functionally, a probable RNA-binding protein. In Chlamydia muridarum (strain MoPn / Nigg), this protein is RNA-binding protein KhpA.